We begin with the raw amino-acid sequence, 418 residues long: Coenzyme A biosynthesis bifunctional protein CoaBC (418 aa).

The phosphopantothenoylcysteine decarboxylase stretch occupies residues 1-195 (MVDHKRIPKQ…ALPYDLAGRK (195 aa)). Positions 196–418 (LLVTAGGTRE…IVTFLAGCSS (223 aa)) are phosphopantothenate--cysteine ligase. CTP-binding residues include D285, K295, F336, K354, and K358.

This sequence in the N-terminal section; belongs to the HFCD (homo-oligomeric flavin containing Cys decarboxylase) superfamily. It in the C-terminal section; belongs to the PPC synthetase family. Mg(2+) is required as a cofactor. FMN serves as cofactor.

The catalysed reaction is N-[(R)-4-phosphopantothenoyl]-L-cysteine + H(+) = (R)-4'-phosphopantetheine + CO2. The enzyme catalyses (R)-4'-phosphopantothenate + L-cysteine + CTP = N-[(R)-4-phosphopantothenoyl]-L-cysteine + CMP + diphosphate + H(+). It functions in the pathway cofactor biosynthesis; coenzyme A biosynthesis; CoA from (R)-pantothenate: step 2/5. Its pathway is cofactor biosynthesis; coenzyme A biosynthesis; CoA from (R)-pantothenate: step 3/5. In terms of biological role, catalyzes two sequential steps in the biosynthesis of coenzyme A. In the first step cysteine is conjugated to 4'-phosphopantothenate to form 4-phosphopantothenoylcysteine. In the second step the latter compound is decarboxylated to form 4'-phosphopantotheine. This chain is Coenzyme A biosynthesis bifunctional protein CoaBC, found in Mycobacterium bovis (strain ATCC BAA-935 / AF2122/97).